Consider the following 431-residue polypeptide: Chaperone SurA (431 aa).

An N-terminal signal peptide occupies residues 1–22; it reads MNLKKLLTSAVLSISLCQSAFA. 2 consecutive PpiC domains span residues 173–274 and 283–383; these read AEEY…KVQD and TTET…QLLD.

Its subcellular location is the periplasm. It catalyses the reaction [protein]-peptidylproline (omega=180) = [protein]-peptidylproline (omega=0). Functionally, chaperone involved in the correct folding and assembly of outer membrane proteins. Recognizes specific patterns of aromatic residues and the orientation of their side chains, which are found more frequently in integral outer membrane proteins. May act in both early periplasmic and late outer membrane-associated steps of protein maturation. This is Chaperone SurA from Pseudoalteromonas translucida (strain TAC 125).